The primary structure comprises 471 residues: Venom prothrombin activator vestarin-D2 (471 aa).

A signal peptide spans 1–20 (MAPQLLLCLILTFLWSLPEA). Residues 21 to 40 (ESNVFLKSNVANRFLQRTKR) constitute a propeptide that is removed on maturation. The Gla domain occupies 41–86 (ANSIFEEIRPGNIERECVEEKCSKEEAREVFQDNEKTEAFWTVYVD). 4-carboxyglutamate is present on residues Glu46, Glu47, Glu54, Glu56, Glu59, Glu60, Glu65, Glu66, Glu69, and Glu75. An intrachain disulfide couples Cys57 to Cys62. In terms of domain architecture, EGF-like 1; calcium-binding spans 86-122 (DGDQCLSNPCHYRGTCKDGIGSYTCTCLPGYEGKNCE). Cystine bridges form between Cys90-Cys101, Cys95-Cys110, Cys112-Cys121, Cys129-Cys140, Cys136-Cys149, Cys151-Cys164, Cys172-Cys333, Cys233-Cys238, Cys381-Cys395, and Cys406-Cys434. An O-linked (Hex...) serine glycan is attached at Ser92. The EGF-like 2 domain maps to 129–164 (CRLFNGNCWHFCKTVQNDTQCSCAEGYRLGVDGFSC). A propeptide spans 182–226 (REASLPDFHFSDDYDAIDENNLVETVQSQSATLLKKSDNPSPDIR) (activation peptide). In terms of domain architecture, Peptidase S1 spans 227-458 (IVSGLDCKLG…FIPWIKTIMR (232 aa)). Residue His268 is the Charge relay system of the active site. Asn271 is a glycosylation site (N-linked (GlcNAc...) asparagine). The active-site Charge relay system is Asp313. Residue Ser410 is the Charge relay system of the active site.

The protein belongs to the peptidase S1 family. Snake venom subfamily. As to quaternary structure, heterodimer of a light chain and a heavy chain; disulfide-linked. In terms of processing, the vitamin K-dependent, enzymatic carboxylation of some glutamate residues allows the modified protein to bind calcium. As to expression, expressed by the venom gland.

It is found in the secreted. It catalyses the reaction Selective cleavage of Arg-|-Thr and then Arg-|-Ile bonds in prothrombin to form thrombin.. Snake prothrombin activator that attacks the hemostatic system of prey. This protein is functionally similar to blood coagulation factor Xa. The protein is Venom prothrombin activator vestarin-D2 of Demansia vestigiata (Lesser black whip snake).